A 498-amino-acid chain; its full sequence is Dynein regulatory complex subunit 5 (498 aa).

2 disordered regions span residues 27–52 (ALGSSSTGPTSLKTSSTPTPGQLKTK) and 200–223 (MPTPLQGEEQSDSGSEGEGSEPEK). A compositionally biased stretch (low complexity) spans 28–47 (LGSSSTGPTSLKTSSTPTPG). 6 LRR repeats span residues 276-299 (CHTLKIFKLTRSKVDDDKARILIR), 306-327 (ALEELDLSHNLIGDRGARAAAK), 333-353 (RLRVLNLANNQLQAPGAQSLA), 361-382 (NLVFLNLRLNCIEDEGGQAIAH), 389-409 (CLSVLHLGGNKLSEPTATLLS), and 417-438 (TLVSLNLSCNHIGQDGGKQLLE).

It belongs to the DRC5 family. In terms of assembly, component of the nexin-dynein regulatory complex (N-DRC). Interacts with DRC1. Interacts with FBXL13/DRC6, DRC3 and DRC7. In terms of tissue distribution, testis-specific (at protein level).

Its subcellular location is the cell projection. The protein localises to the cilium. It is found in the flagellum. The protein resides in the cytoplasm. It localises to the cytoskeleton. Its subcellular location is the flagellum axoneme. Its function is as follows. Component of the nexin-dynein regulatory complex (N-DRC) a key regulator of ciliary/flagellar motility which maintains the alignment and integrity of the distal axoneme and regulates microtubule sliding in motile axonemes. May play a role in the assembly of N-DRC. Required for sperm motility. The protein is Dynein regulatory complex subunit 5 (Tcte1) of Mus musculus (Mouse).